The primary structure comprises 430 residues: Inactive metallocarboxypeptidase ECM14 (430 aa).

The N-terminal stretch at Met-1–Gly-24 is a signal peptide. Residues Leu-25 to Arg-105 constitute a propeptide that is removed on maturation. Asn-41 is a glycosylation site (N-linked (GlcNAc...) asparagine). The 306-residue stretch at Glu-120–Leu-425 folds into the Peptidase M14 domain. Zn(2+) is bound by residues His-182 and Glu-185. Residues His-182 to Glu-185, Arg-240, and Asp-257 to His-258 contribute to the substrate site. Cys-251 and Cys-272 form a disulfide bridge. N-linked (GlcNAc...) asparagine glycosylation is present at Asn-295. His-310 lines the Zn(2+) pocket. Residue Ser-311–Tyr-312 participates in substrate binding.

The protein belongs to the peptidase M14 family. Zn(2+) serves as cofactor. In terms of processing, N-glycosylated.

Its subcellular location is the vacuole. It is found in the secreted. Inactive carboxypeptidase that may play a role in cell wall organization and biogenesis. The sequence is that of Inactive metallocarboxypeptidase ECM14 from Saccharomyces cerevisiae (strain ATCC 204508 / S288c) (Baker's yeast).